Here is a 142-residue protein sequence, read N- to C-terminus: MVLSDANKQEIHHVAELIKPHAEAVGADALARLFELHPQTKTYFPNFSGYHATDAPVKAHGAKVINAVLKAAEHLDDLPKHLEKLATKHGHELLVDPHNFVLFSDIIVVTLATKLPTFSPATHRAIDKFLEELVHQLSSKYR.

The Globin domain occupies 2–142 (VLSDANKQEI…LVHQLSSKYR (141 aa)). Histidine 60 is an O2 binding site. Residue histidine 89 participates in heme b binding.

This sequence belongs to the globin family. As to quaternary structure, heterotetramer of two alpha chains and two beta chains. In terms of tissue distribution, red blood cells.

Its function is as follows. Involved in oxygen transport from gills to the various peripheral tissues. The polypeptide is Hemoglobin subunit alpha (HBA) (Bathyraja eatonii (Eaton's skate)).